Here is a 151-residue protein sequence, read N- to C-terminus: FIS1-related protein fis-2 (151 aa).

A helical transmembrane segment spans residues 126-146 (LIGAAIVGGGALALAGLVAIF).

It belongs to the FIS1 family.

It localises to the mitochondrion outer membrane. The protein localises to the peroxisome membrane. It is found in the mitochondrion. Functionally, involved in the fragmentation of the mitochondrial network. Involved in perinuclear clustering of the mitochondrial network. May act, redundantly with fis-1, downstream of mitochondrial fission, before the fission products participate in mitochondrial homeostasis, mitophagy, or apoptosis. Plays a role in apoptosis by promoting mitochondrial elimination and cell-death execution, acting downstream of caspase ced-3, and perhaps independently of dynamin GTPase drp-1, caspase ced-9 and apoptosis-inducing factor AIFM/wah-1. The protein is FIS1-related protein fis-2 of Caenorhabditis elegans.